The chain runs to 1150 residues: RNA polymerase-associated protein CTR9 (1150 aa).

TPR repeat units follow at residues 143–176, 177–210, 212–245, 247–282, 320–353, 355–388, 432–464, 471–504, 594–627, 643–677, 679–711, 712–745, and 748–781; these read VRAW…NPKN, VLPL…CRHT, ADLR…EPYN, SAMC…QTDH, AEAF…NNGE, TLAH…LPNN, YEAC…LVTN, PEML…LEEQ, PIVW…IFNN, FEQL…QPKN, YAAN…TSEF, YDVW…FRKE, and STLQ…QLDN. Coiled coils occupy residues 848-916 and 972-1028; these read AEEA…NLRL and ERRE…AKQS. The interval 935-1150 is disordered; the sequence is KRRGGGGRKR…KKKVIESDSD (216 aa). Residues 975 to 992 show a composition bias toward basic residues; it reads ERRKKDKAAKKASRKKRE. 4 stretches are compositionally biased toward basic and acidic residues: residues 993 to 1005, 1013 to 1024, 1060 to 1084, and 1132 to 1150; these read RRDS…NRRD, EERDRKLQEKLS, DPRP…ETTT, and RDSD…SDSD.

As to quaternary structure, component of the PAF1 complex which consists of at least cdc-73, ctr-9, leo-1, pafo-1 and rtfo-1.

It localises to the nucleus. Component of the PAF1 complex which is a multifunctional complex involved in transcription initiation via genetic interactions with TATA-binding proteins, elongation and transcription-coupled histone modification. Ctr-9 is required for epidermal microtubule organization during morphogenesis. This Caenorhabditis elegans protein is RNA polymerase-associated protein CTR9.